A 400-amino-acid chain; its full sequence is Exodeoxyribonuclease 7 large subunit (400 aa).

It belongs to the XseA family. In terms of assembly, heterooligomer composed of large and small subunits.

It is found in the cytoplasm. It carries out the reaction Exonucleolytic cleavage in either 5'- to 3'- or 3'- to 5'-direction to yield nucleoside 5'-phosphates.. Bidirectionally degrades single-stranded DNA into large acid-insoluble oligonucleotides, which are then degraded further into small acid-soluble oligonucleotides. The sequence is that of Exodeoxyribonuclease 7 large subunit from Clostridium perfringens (strain ATCC 13124 / DSM 756 / JCM 1290 / NCIMB 6125 / NCTC 8237 / Type A).